Consider the following 134-residue polypeptide: Fluoride-specific ion channel FluC (134 aa).

4 helical membrane-spanning segments follow: residues 7–27 (LAVA…TIMA), 38–58 (GTLL…IVLV), 69–89 (LFLF…AAES), and 110–130 (VGSL…LLGH). Gly-77 and Thr-80 together coordinate Na(+).

This sequence belongs to the fluoride channel Fluc/FEX (TC 1.A.43) family.

Its subcellular location is the cell inner membrane. The enzyme catalyses fluoride(in) = fluoride(out). Its activity is regulated as follows. Na(+) is not transported, but it plays an essential structural role and its presence is essential for fluoride channel function. Fluoride-specific ion channel. Important for reducing fluoride concentration in the cell, thus reducing its toxicity. The protein is Fluoride-specific ion channel FluC of Legionella pneumophila (strain Lens).